The primary structure comprises 338 residues: Probable dual-specificity RNA methyltransferase RlmN (338 aa).

Residue glutamate 89 is the Proton acceptor of the active site. In terms of domain architecture, Radical SAM core spans 95–325 (HNYGMSACVT…AILRKEQGHD (231 aa)). Cysteine 102 and cysteine 330 are joined by a disulfide. Residues cysteine 109, cysteine 113, and cysteine 116 each coordinate [4Fe-4S] cluster. S-adenosyl-L-methionine is bound by residues 156–157 (GE), serine 188, 211–213 (SLH), and asparagine 287. Residue cysteine 330 is the S-methylcysteine intermediate of the active site.

Belongs to the radical SAM superfamily. RlmN family. The cofactor is [4Fe-4S] cluster.

It localises to the cytoplasm. The enzyme catalyses adenosine(2503) in 23S rRNA + 2 reduced [2Fe-2S]-[ferredoxin] + 2 S-adenosyl-L-methionine = 2-methyladenosine(2503) in 23S rRNA + 5'-deoxyadenosine + L-methionine + 2 oxidized [2Fe-2S]-[ferredoxin] + S-adenosyl-L-homocysteine. The catalysed reaction is adenosine(37) in tRNA + 2 reduced [2Fe-2S]-[ferredoxin] + 2 S-adenosyl-L-methionine = 2-methyladenosine(37) in tRNA + 5'-deoxyadenosine + L-methionine + 2 oxidized [2Fe-2S]-[ferredoxin] + S-adenosyl-L-homocysteine. Functionally, specifically methylates position 2 of adenine 2503 in 23S rRNA and position 2 of adenine 37 in tRNAs. This Acholeplasma laidlawii (strain PG-8A) protein is Probable dual-specificity RNA methyltransferase RlmN.